A 192-amino-acid polypeptide reads, in one-letter code: Glycerol-3-phosphate acyltransferase (192 aa).

5 helical membrane-spanning segments follow: residues Met-4 to Leu-24, Leu-54 to Ser-74, Ile-80 to Phe-100, Ala-112 to Leu-132, and Leu-154 to Val-174.

Belongs to the PlsY family. As to quaternary structure, probably interacts with PlsX.

The protein resides in the cell inner membrane. The catalysed reaction is an acyl phosphate + sn-glycerol 3-phosphate = a 1-acyl-sn-glycero-3-phosphate + phosphate. The protein operates within lipid metabolism; phospholipid metabolism. In terms of biological role, catalyzes the transfer of an acyl group from acyl-phosphate (acyl-PO(4)) to glycerol-3-phosphate (G3P) to form lysophosphatidic acid (LPA). This enzyme utilizes acyl-phosphate as fatty acyl donor, but not acyl-CoA or acyl-ACP. The chain is Glycerol-3-phosphate acyltransferase from Pseudomonas savastanoi pv. phaseolicola (strain 1448A / Race 6) (Pseudomonas syringae pv. phaseolicola (strain 1448A / Race 6)).